We begin with the raw amino-acid sequence, 299 residues long: DNA-binding transcriptional activator HetR (299 aa).

Positions M1–Q98 are DNA-binding domain. DNA is bound by residues R34–D40 and N60–K76. The flap domain stretch occupies residues E99–A216. S152 is an active-site residue. S179–A181 serves as a coordination point for DNA. The tract at residues P217–D299 is hood domain.

It belongs to the peptidase S48 family. Upon expression in E.coli most protein is monomeric, although varying amounts of homodimer can be seen. Homodimer; disulfide-linked. Homodimer. Binds the 6 residue C-terminal peptide of PatS; one peptide binds to each subunit. In bacterial two-hybrid assays interacts robustly with itself, Alr2902 and Alr3234 and more weakly with Als1930. In terms of processing, probably autodegrades.

Its activity is regulated as follows. Protease activity is inhibited by PMSF, suggesting this is a serine protease. In terms of biological role, controls heterocyst differentiation. Dimerization is required for DNA-binding. Has both a protease and a DNA-binding activity. Controls heterocyst differentiation; increased expression leads to more heterocysts than usual. Has protease activity. Binds the promoter regions of hetR, hepA and patS and is required for their expression. Dimerization is required for DNA-binding, DNA-binding is inhibited by the PatS6 peptide. Binds the inverted repeat 5'-GTAGGCGAGGGGTCTAACCCCTCATTACC-3' found in the hetP promoter, required for expression of hetP. The sequence is that of DNA-binding transcriptional activator HetR from Nostoc sp. (strain PCC 7120 / SAG 25.82 / UTEX 2576).